Reading from the N-terminus, the 357-residue chain is MKFSSVLALAASAKLVASHATVFAVWINDEDQGLGNTADGYIRTPPNNSPVTDVTSTDLTCNVNGDQAAAKTLEVAAGDKITFEWHHNSRDSSDDIIADSHKGPVLVYMAPTEAGSAGKNWVKIYEDGYNDGTWAVDTLIANKGKHSVTVPDVPAGNYLFRPEIIALHEGNREGGAQLYMECVQFKVTSDGTTQLPEGVSLPGAYTATDEGILFDIYSSFDSYPIPGPAVWDGASSGSGSSGSGSSSSAAATSSAEKTATSTTAAATTTAVATSTSSATQVQPTSVATFTTSVRPTTSAAPTTSAPTSSAAPTGGTGTGSIQIYQQCGGMNYKGATGCASGLTCKQWNPYYHQCVQA.

A signal peptide spans 1–18 (MKFSSVLALAASAKLVAS). The Cu(2+) site is built by His19 and His101. Residues 19–234 (HATVFAVWIN…IPGPAVWDGA (216 aa)) are catalytic. Cysteines 61 and 182 form a disulfide. Residues His168 and Gln177 each coordinate O2. Tyr179 contacts Cu(2+). The tract at residues 235–318 (SSGSGSSGSG…SAAPTGGTGT (84 aa)) is ser/Thr-rich linker. A disordered region spans residues 292 to 317 (SVRPTTSAAPTTSAPTSSAAPTGGTG). Residues 295-313 (PTTSAAPTTSAPTSSAAPT) show a composition bias toward low complexity. A CBM1 domain is found at 319 to 355 (GSIQIYQQCGGMNYKGATGCASGLTCKQWNPYYHQCV).

The protein belongs to the polysaccharide monooxygenase AA9 family. It depends on Cu(2+) as a cofactor.

It localises to the secreted. The catalysed reaction is [(1-&gt;4)-beta-D-glucosyl]n+m + reduced acceptor + O2 = 4-dehydro-beta-D-glucosyl-[(1-&gt;4)-beta-D-glucosyl]n-1 + [(1-&gt;4)-beta-D-glucosyl]m + acceptor + H2O.. Its function is as follows. Lytic polysaccharide monooxygenase (LPMO) that depolymerizes crystalline and amorphous polysaccharides via the oxidation of scissile alpha- or beta-(1-4)-glycosidic bonds, yielding C4 oxidation products. Catalysis by LPMOs requires the reduction of the active-site copper from Cu(II) to Cu(I) by a reducing agent and H(2)O(2) or O(2) as a cosubstrate. Active on carboxymethylcellulose (CMC), hydroxyethylcellulose (HEC) and beta-glucan. Also active on soluble cellohexaose, a property that is restricted to only a few characterized LPMOs. This is AA9 family lytic polysaccharide monooxygenase B from Emericella nidulans (strain FGSC A4 / ATCC 38163 / CBS 112.46 / NRRL 194 / M139) (Aspergillus nidulans).